A 421-amino-acid polypeptide reads, in one-letter code: Phosphoribosylamine--glycine ligase (421 aa).

The ATP-grasp domain maps to 108-314 (KEIMVKYNVP…FAQNIDDIMM (207 aa)). Position 134 to 195 (134 to 195 (IEEQGAPIVV…EEFLDGEEFS (62 aa))) interacts with ATP. Residues Glu284 and Asn286 each contribute to the Mg(2+) site.

Belongs to the GARS family. Mg(2+) serves as cofactor. The cofactor is Mn(2+).

The catalysed reaction is 5-phospho-beta-D-ribosylamine + glycine + ATP = N(1)-(5-phospho-beta-D-ribosyl)glycinamide + ADP + phosphate + H(+). It participates in purine metabolism; IMP biosynthesis via de novo pathway; N(1)-(5-phospho-D-ribosyl)glycinamide from 5-phospho-alpha-D-ribose 1-diphosphate: step 2/2. In Streptococcus pyogenes serotype M18 (strain MGAS8232), this protein is Phosphoribosylamine--glycine ligase.